The primary structure comprises 377 residues: Putative F-box only protein 10 (377 aa).

The 46-residue stretch at 1 to 46 folds into the F-box domain; it reads MVSVNLPWELVEEILYRVPPQSLARFRTVCKQWNSLFDDNKFVNDH.

The protein is Putative F-box only protein 10 (FBX10) of Arabidopsis thaliana (Mouse-ear cress).